The sequence spans 427 residues: Trigger factor (427 aa).

The PPIase FKBP-type domain maps to 163-248; the sequence is GDTVVIDFEG…VHEVKAKELP (86 aa).

This sequence belongs to the FKBP-type PPIase family. Tig subfamily.

The protein resides in the cytoplasm. The catalysed reaction is [protein]-peptidylproline (omega=180) = [protein]-peptidylproline (omega=0). In terms of biological role, involved in protein export. Acts as a chaperone by maintaining the newly synthesized protein in an open conformation. Functions as a peptidyl-prolyl cis-trans isomerase. This Enterococcus faecalis (strain ATCC 700802 / V583) protein is Trigger factor.